The following is a 213-amino-acid chain: Thiamine-phosphate synthase (213 aa).

4-amino-2-methyl-5-(diphosphooxymethyl)pyrimidine is bound by residues 38–42 (QLREK) and Asp-70. Mg(2+)-binding residues include Asp-71 and Glu-90. 4-amino-2-methyl-5-(diphosphooxymethyl)pyrimidine is bound at residue Ser-109. Position 135–137 (135–137 (TQT)) interacts with 2-[(2R,5Z)-2-carboxy-4-methylthiazol-5(2H)-ylidene]ethyl phosphate. Residue Lys-138 coordinates 4-amino-2-methyl-5-(diphosphooxymethyl)pyrimidine. 2-[(2R,5Z)-2-carboxy-4-methylthiazol-5(2H)-ylidene]ethyl phosphate contacts are provided by residues Gly-165 and 185 to 186 (VS).

It belongs to the thiamine-phosphate synthase family. The cofactor is Mg(2+).

The enzyme catalyses 2-[(2R,5Z)-2-carboxy-4-methylthiazol-5(2H)-ylidene]ethyl phosphate + 4-amino-2-methyl-5-(diphosphooxymethyl)pyrimidine + 2 H(+) = thiamine phosphate + CO2 + diphosphate. The catalysed reaction is 2-(2-carboxy-4-methylthiazol-5-yl)ethyl phosphate + 4-amino-2-methyl-5-(diphosphooxymethyl)pyrimidine + 2 H(+) = thiamine phosphate + CO2 + diphosphate. It carries out the reaction 4-methyl-5-(2-phosphooxyethyl)-thiazole + 4-amino-2-methyl-5-(diphosphooxymethyl)pyrimidine + H(+) = thiamine phosphate + diphosphate. Its pathway is cofactor biosynthesis; thiamine diphosphate biosynthesis; thiamine phosphate from 4-amino-2-methyl-5-diphosphomethylpyrimidine and 4-methyl-5-(2-phosphoethyl)-thiazole: step 1/1. Its function is as follows. Condenses 4-methyl-5-(beta-hydroxyethyl)thiazole monophosphate (THZ-P) and 2-methyl-4-amino-5-hydroxymethyl pyrimidine pyrophosphate (HMP-PP) to form thiamine monophosphate (TMP). The chain is Thiamine-phosphate synthase from Lacticaseibacillus paracasei (strain ATCC 334 / BCRC 17002 / CCUG 31169 / CIP 107868 / KCTC 3260 / NRRL B-441) (Lactobacillus paracasei).